A 28-amino-acid chain; its full sequence is Toxin a (28 aa).

Residues 3–28 (VPGNYPLDSYGNCYPCTILGDNQYCI) enclose the LCN-type CS-alpha/beta domain.

This sequence belongs to the long (3 C-C) scorpion toxin superfamily. In terms of tissue distribution, expressed by the venom gland.

The protein resides in the secreted. Binds to sodium channels (Nav) and affects the channel activation process. The protein is Toxin a of Androctonus crassicauda (Arabian fat-tailed scorpion).